The sequence spans 521 residues: Sodium/hydrogen exchanger 5 (521 aa).

The Cytoplasmic segment spans residues 1–23; that stretch reads MEEVMISPVEHDPQGQVKQQQAA. A helical transmembrane segment spans residues 24–44; it reads GVGILLQIMMLVLSFVLGHVL. The Lumenal portion of the chain corresponds to 45–48; that stretch reads RRHR. A helical transmembrane segment spans residues 49–69; that stretch reads FHYLPEASGSLLIGLIVGILA. Residues 70–86 lie on the Cytoplasmic side of the membrane; sequence NISDTETSIRTWFNFHE. The helical intramembrane region spans 87–107; that stretch reads EFFFLFLLPPIIFQSGFSLQP. Residues 108-115 are Cytoplasmic-facing; sequence KPFFSNFG. A helical membrane pass occupies residues 116 to 136; it reads AIVTFAIIGTFVASVVTGGLV. Over 137-141 the chain is Lumenal; that stretch reads YLGGS. 2 consecutive intramembrane regions (helical) follow at residues 142 to 162 and 166 to 186; these read MYLM…LISA and VTVL…ALVF. The Lumenal portion of the chain corresponds to 187–222; that stretch reads GESVLNDAMAISLYRTMSLVNRQSSSGEHFFMVVIR. Residues 223 to 243 form a helical membrane-spanning segment; it reads FFETFAGSMSAGVGVGFTSAL. The Cytoplasmic portion of the chain corresponds to 244–271; sequence LFKYAGLDTENLQNLECCLFVLFPYFSY. The chain crosses the membrane as a helical span at residues 272-292; the sequence is MLAEGVGLSGIVSILFTGIVM. Residues 293-310 are Lumenal-facing; that stretch reads KRYTFSNLSEASQSFVSS. An N-linked (GlcNAc...) asparagine glycan is attached at Asn-299. Residues 311-331 form a helical membrane-spanning segment; sequence FFHLISSLAETFTFIYMGFDI. Residues 332-340 are Cytoplasmic-facing; it reads AMEQHSWSH. Residues 341–361 traverse the membrane as a helical segment; sequence VGFILFSILFIGVARAVNVFG. The Lumenal portion of the chain corresponds to 362–382; sequence CAYLVNLFRQENQKIPMKHQK. A helical transmembrane segment spans residues 383–402; the sequence is ALWYSGLRGAMAFALALQSL. Topologically, residues 403–411 are cytoplasmic; the sequence is HDLPEGHGQ. Residues 412–432 traverse the membrane as a helical segment; the sequence is IIFTATTTIVVVTVLLIGGST. Residues 433–521 are Lumenal-facing; the sequence is GKMLEALEVV…NSGDGDGDGE (89 aa). A disordered region spans residues 453 to 480; sequence GFEESDHQYVPPPFSIGASSDEDTSSSG. Low complexity predominate over residues 467 to 480; sequence SIGASSDEDTSSSG.

It belongs to the monovalent cation:proton antiporter 1 (CPA1) transporter (TC 2.A.36) family. Expressed in roots, leaves, stems, flowers and siliques. Detected at low levels in roots and shoots.

The protein localises to the endosome membrane. It localises to the golgi apparatus. It is found in the trans-Golgi network membrane. Its subcellular location is the golgi stack membrane. It carries out the reaction Na(+)(in) + H(+)(out) = Na(+)(out) + H(+)(in). The enzyme catalyses K(+)(in) + H(+)(out) = K(+)(out) + H(+)(in). In terms of biological role, involved in trafficking to the vacuole. Required for cell proliferation and cell expansion, but not for cell differentiation. Acts in low affinity electroneutral exchange of protons for cations such as Na(+) or K(+) across membranes. May also exchange Li(+) and Cs(+) with a lower affinity. In Arabidopsis thaliana (Mouse-ear cress), this protein is Sodium/hydrogen exchanger 5 (NHX5).